Consider the following 438-residue polypeptide: Battenin (438 aa).

Residues 1–29 (MGGCAGSRRRLLDSEEEETAPEPRPPRSY) form a disordered region. At 1 to 37 (MGGCAGSRRRLLDSEEEETAPEPRPPRSYHKGALWKN) the chain is on the cytoplasmic side. Ser-14 bears the Phosphoserine mark. The chain crosses the membrane as a helical span at residues 38–58 (VMGFWLLGLCNNFSYVVMLSA). At 59–127 (AHDILSHQRA…GLHLLPYSPR (69 aa)) the chain is on the lumenal side. The interval 68–89 (ASGNQSHVDPDPPPTAHNSSSR) is disordered. N-linked (GlcNAc...) asparagine glycosylation is found at Asn-71 and Asn-85. The helical transmembrane segment at 128–148 (VLVSGICAAGSFILVAFSHSV) threads the bilayer. Residues 149 to 151 (GTS) are Cytoplasmic-facing. Residues 152–172 (LCGVVLASISSGVGEVTFLSL) traverse the membrane as a helical segment. Topologically, residues 173–182 (TAFYPRAVIS) are lumenal. A helical membrane pass occupies residues 183-203 (WWSSGTGGAGLMGALSYLGLT). Topologically, residues 204-277 (QAGLSPQHTL…NLSLQERWTV (74 aa)) are cytoplasmic. The tract at residues 236 to 267 (PQDPGGEEEAETSARQPLIDSETPESKPDSSS) is disordered. The short motif at 242 to 244 (EEE) is the Lysosomal targeting motif element. Positions 253-254 (LI) match the Lysosomal targeting motif. Required for AP1G1, AP2A2 and AP3D1 interaction motif. The helical transmembrane segment at 278 to 298 (FKGLLWYIVPLVLVYFAEYFI) threads the bilayer. Residues 299–346 (NQGLFELLFFRNTSLNHAQQYRWYQMLYQAGVFVSRSSLHCCRIRFTW) lie on the Lumenal side of the membrane. N-linked (GlcNAc...) asparagine glycosylation is present at Asn-310. Residues 347–367 (VLALLQCLNLAFLLVDVWFSF) form a helical membrane-spanning segment. The Cytoplasmic segment spans residues 368-438 (LPSIYLVFLI…PLHDFLCHLS (71 aa)). Positions 409 to 419 (MAAACISDTLG) match the Lysosomal targeting motif motif. Cys-435 is modified (cysteine methyl ester). Residue Cys-435 is the site of S-farnesyl cysteine attachment. Positions 436 to 438 (HLS) are cleaved as a propeptide — removed in mature form.

The protein belongs to the battenin family. In terms of assembly, interacts with DCTN1, KIF3A, RAB7A and RILP. Interacts with CLN5. Post-translationally, highly glycosylated. Farnesylation is important for trafficking to lysosomes.

The protein localises to the lysosome membrane. The protein resides in the late endosome. Its subcellular location is the lysosome. Functionally, mediates microtubule-dependent, anterograde transport connecting the Golgi network, endosomes, autophagosomes, lysosomes and plasma membrane, and participates in several cellular processes such as regulation of lysosomal pH, lysosome protein degradation, receptor-mediated endocytosis, autophagy, transport of proteins and lipids from the TGN, apoptosis and synaptic transmission. Facilitates the proteins transport from trans-Golgi network (TGN)-to other membrane compartments such as transport of microdomain-associated proteins to the plasma membrane, IGF2R transport to the lysosome where it regulates the CTSD release leading to regulation of CTSD maturation and thereby APP intracellular processing. Moreover regulates CTSD activity in response to osmotic stress. Also binds galactosylceramide and transports it from the trans Golgi to the rafts, which may have immediate and downstream effects on cell survival by modulating ceramide synthesis. At the plasma membrane, regulates actin-dependent events including filopodia formation, cell migration, and pinocytosis through ARF1-CDC42 pathway and also the cytoskeleton organization through interaction with MYH10 and fodrin leading to the regulation of the plasma membrane association of Na+, K+ ATPase complex. Regulates synaptic transmission in the amygdala, hippocampus, and cerebellum through regulation of synaptic vesicles density and their proximity to active zones leading to modulation of short-term plasticity and age-dependent anxious behavior, learning and memory. Regulates autophagic vacuoles (AVs) maturation by modulating the trafficking between endocytic and autophagolysosomal/lysosomal compartments, which involves vesicle fusion leading to regulation of degradation process. Also participates in cellular homeostasis of compounds such as, water, ions, amino acids, proteins and lipids in several tissue namely in brain and kidney through regulation of their transport and synthesis. In Canis lupus familiaris (Dog), this protein is Battenin.